Consider the following 120-residue polypeptide: Large ribosomal subunit protein uL18 (120 aa).

This sequence belongs to the universal ribosomal protein uL18 family. Part of the 50S ribosomal subunit; part of the 5S rRNA/L5/L18/L25 subcomplex. Contacts the 5S and 23S rRNAs.

Functionally, this is one of the proteins that bind and probably mediate the attachment of the 5S RNA into the large ribosomal subunit, where it forms part of the central protuberance. This Afipia carboxidovorans (strain ATCC 49405 / DSM 1227 / KCTC 32145 / OM5) (Oligotropha carboxidovorans) protein is Large ribosomal subunit protein uL18.